A 395-amino-acid polypeptide reads, in one-letter code: S-adenosylmethionine synthase (395 aa).

ATP is bound at residue H16. D18 is a binding site for Mg(2+). E44 contacts K(+). The L-methionine site is built by E57 and Q100. The segment at 100 to 110 (QSPDIAQGVDD) is flexible loop. ATP-binding positions include 174–176 (DAK), 241–242 (RF), D250, 256–257 (RK), A273, and K277. Residue D250 participates in L-methionine binding. K281 serves as a coordination point for L-methionine.

The protein belongs to the AdoMet synthase family. Homotetramer; dimer of dimers. Mg(2+) is required as a cofactor. It depends on K(+) as a cofactor.

It localises to the cytoplasm. The enzyme catalyses L-methionine + ATP + H2O = S-adenosyl-L-methionine + phosphate + diphosphate. It participates in amino-acid biosynthesis; S-adenosyl-L-methionine biosynthesis; S-adenosyl-L-methionine from L-methionine: step 1/1. Catalyzes the formation of S-adenosylmethionine (AdoMet) from methionine and ATP. The overall synthetic reaction is composed of two sequential steps, AdoMet formation and the subsequent tripolyphosphate hydrolysis which occurs prior to release of AdoMet from the enzyme. This chain is S-adenosylmethionine synthase, found in Levilactobacillus brevis (strain ATCC 367 / BCRC 12310 / CIP 105137 / JCM 1170 / LMG 11437 / NCIMB 947 / NCTC 947) (Lactobacillus brevis).